The primary structure comprises 346 residues: Phenylalanine--tRNA ligase alpha subunit (346 aa).

Glutamate 259 lines the Mg(2+) pocket.

Belongs to the class-II aminoacyl-tRNA synthetase family. Phe-tRNA synthetase alpha subunit type 1 subfamily. As to quaternary structure, tetramer of two alpha and two beta subunits. Mg(2+) serves as cofactor.

The protein resides in the cytoplasm. It carries out the reaction tRNA(Phe) + L-phenylalanine + ATP = L-phenylalanyl-tRNA(Phe) + AMP + diphosphate + H(+). The chain is Phenylalanine--tRNA ligase alpha subunit from Lactococcus lactis subsp. lactis (strain IL1403) (Streptococcus lactis).